The chain runs to 591 residues: Serine/threonine-protein kinase PAK 4 (591 aa).

Residues 11-24 enclose the CRIB domain; the sequence is ISAPSNFEHRVHTG. The interval 25-320 is linker; sequence FDQHEQKFTG…VVDPGDPRSY (296 aa). Ser-41 bears the Phosphoserine mark. At Lys-78 the chain carries N6-methyllysine. Residues 95 to 301 are disordered; that stretch reads TRSNSLRRDS…PQREPQRVSH (207 aa). Ser-104 and Ser-148 each carry phosphoserine. Over residues 149–164 the composition is skewed to basic and acidic residues; sequence GDRRRAGPEKRPKSSR. Residues Ser-167 and Ser-181 each carry the phosphoserine modification. At Thr-187 the chain carries Phosphothreonine. A compositionally biased stretch (low complexity) spans 191–202; it reads AGLASGAKLAAG. Phosphoserine is present on Ser-195. A Phosphothreonine modification is found at Thr-207. Positions 242-260 are enriched in low complexity; the sequence is SSSSSSRPPTRARGAPSPG. 2 positions are modified to phosphoserine: Ser-258 and Ser-267. Residues 271 to 290 are compositionally biased toward pro residues; the sequence is LAPPACTPAAPAVPGPPGPR. The residue at position 291 (Ser-291) is a Phosphoserine. The span at 292-301 shows a compositional bias: basic and acidic residues; that stretch reads PQREPQRVSH. The GEF-interaction domain (GID) stretch occupies residues 298–323; sequence RVSHEQFRAALQLVVDPGDPRSYLDN. The Protein kinase domain occupies 321–572; sequence LDNFIKIGEG…AAELLKHPFL (252 aa). ATP-binding positions include 327 to 335, Lys-350, and 396 to 398; these read IGEGSTGIV and EFL. The active-site Proton acceptor is the Asp-440. 458 to 460 provides a ligand contact to ATP; that stretch reads DFG. Phosphoserine; by autocatalysis is present on Ser-474.

This sequence belongs to the protein kinase superfamily. STE Ser/Thr protein kinase family. STE20 subfamily. Interacts with FGFR2 and GRB2. Interacts tightly with GTP-bound but not GDP-bound CDC42/p21 and weakly with RAC1. Interacts with INKA1. Interacts with SH3RF2. Interacts with RHOU and PAXI; the PAK4-RHOU complex protects RHOU from ubiquitination and acts as a scaffold to suppport paxillin/PAXI phosphorylation. Autophosphorylated on serine residues when activated by CDC42/p21. Phosphorylated on tyrosine residues upon stimulation of FGFR2. Methylated by SETD6. In terms of processing, polyubiquitinated, leading to its proteasomal degradation. In terms of tissue distribution, highest expression in prostate, testis and colon.

It is found in the cytoplasm. It catalyses the reaction L-seryl-[protein] + ATP = O-phospho-L-seryl-[protein] + ADP + H(+). The enzyme catalyses L-threonyl-[protein] + ATP = O-phospho-L-threonyl-[protein] + ADP + H(+). Its activity is regulated as follows. Inhibited by INKA1; which inhibits the serine/threonine-protein kinase activity by binding PAK4 in a substrate-like manner. Its function is as follows. Serine/threonine-protein kinase that plays a role in a variety of different signaling pathways including cytoskeleton regulation, cell adhesion turnover, cell migration, growth, proliferation or cell survival. Activation by various effectors including growth factor receptors or active CDC42 and RAC1 results in a conformational change and a subsequent autophosphorylation on several serine and/or threonine residues. Phosphorylates and inactivates the protein phosphatase SSH1, leading to increased inhibitory phosphorylation of the actin binding/depolymerizing factor cofilin. Decreased cofilin activity may lead to stabilization of actin filaments. Phosphorylates LIMK1, a kinase that also inhibits the activity of cofilin. Phosphorylates integrin beta5/ITGB5 and thus regulates cell motility. Phosphorylates ARHGEF2 and activates the downstream target RHOA that plays a role in the regulation of assembly of focal adhesions and actin stress fibers. Stimulates cell survival by phosphorylating the BCL2 antagonist of cell death BAD. Alternatively, inhibits apoptosis by preventing caspase-8 binding to death domain receptors in a kinase independent manner. Plays a role in cell-cycle progression by controlling levels of the cell-cycle regulatory protein CDKN1A and by phosphorylating RAN. Promotes kinase-independent stabilization of RHOU, thereby contributing to focal adhesion disassembly during cell migration. This is Serine/threonine-protein kinase PAK 4 from Homo sapiens (Human).